The primary structure comprises 233 residues: U2 small nuclear ribonucleoprotein A' (233 aa).

4 LRR repeats span residues 20–40 (KLTL…AITQ), 42–63 (KYQV…PKRF), 65–86 (NLQC…SFPS), and 89–110 (HITS…FKDK). An LRRCT domain is found at 122–160 (NPITEMENYRYFIIWLIPSLKVLDFKKVKQAERKTSEDM).

The protein belongs to the U2 small nuclear ribonucleoprotein A family. As to quaternary structure, associated with the spliceosome.

The protein resides in the nucleus. Its function is as follows. Involved in pre-mRNA splicing. The protein is U2 small nuclear ribonucleoprotein A' (LEA1) of Candida albicans (strain SC5314 / ATCC MYA-2876) (Yeast).